The primary structure comprises 311 residues: Aspartate carbamoyltransferase catalytic subunit (311 aa).

Positions 55 and 56 each coordinate carbamoyl phosphate. Lysine 85 provides a ligand contact to L-aspartate. Carbamoyl phosphate contacts are provided by arginine 106, histidine 135, and glutamine 138. Positions 168 and 230 each coordinate L-aspartate. Leucine 268 and proline 269 together coordinate carbamoyl phosphate.

It belongs to the aspartate/ornithine carbamoyltransferase superfamily. ATCase family. Heterododecamer (2C3:3R2) of six catalytic PyrB chains organized as two trimers (C3), and six regulatory PyrI chains organized as three dimers (R2).

The catalysed reaction is carbamoyl phosphate + L-aspartate = N-carbamoyl-L-aspartate + phosphate + H(+). Its pathway is pyrimidine metabolism; UMP biosynthesis via de novo pathway; (S)-dihydroorotate from bicarbonate: step 2/3. Functionally, catalyzes the condensation of carbamoyl phosphate and aspartate to form carbamoyl aspartate and inorganic phosphate, the committed step in the de novo pyrimidine nucleotide biosynthesis pathway. This Salmonella paratyphi A (strain AKU_12601) protein is Aspartate carbamoyltransferase catalytic subunit.